The primary structure comprises 348 residues: MTVRIAINGFGRIGRNVVRALYESGRRAEITVVAINELADAAGMAHLLKYDTSHGRFAWEVRHEREQLFVGDDVIRILHERTLADLPWRELGVDVVLDCTGVYGNQEHGEAHIAAGAKKVLFSHPGSNDLDATVVFGVNQNQLRAEHRIVSNASCTTNCIIPVIKLLDDAYGIESGTVTAIHSAMNDQQVIDAYHSDLRRTRAASQSIIPVDTKLAAGITRIFPQFNDRFEAIAVRVPTINVTAIDLSVTVKKPVKASEVNQLLQKAAQGAFHGIVDYTESPLVSIDFNHDPHSAIVDGTQTRVSGAHLIKTLVWCDNEWGFANRMLDTTLAMAAVDFRLDASASTKL.

NAD(+)-binding positions include 12 to 13 and arginine 81; that span reads RI. Substrate-binding positions include 154–156, arginine 200, 213–214, and arginine 236; these read SCT and TK. The active-site Nucleophile is cysteine 155. Asparagine 318 serves as a coordination point for NAD(+).

The protein belongs to the glyceraldehyde-3-phosphate dehydrogenase family. Epd subfamily. As to quaternary structure, homotetramer.

The protein localises to the cytoplasm. The enzyme catalyses D-erythrose 4-phosphate + NAD(+) + H2O = 4-phospho-D-erythronate + NADH + 2 H(+). It functions in the pathway cofactor biosynthesis; pyridoxine 5'-phosphate biosynthesis; pyridoxine 5'-phosphate from D-erythrose 4-phosphate: step 1/5. In terms of biological role, catalyzes the NAD-dependent conversion of D-erythrose 4-phosphate to 4-phosphoerythronate. In Salmonella paratyphi A (strain ATCC 9150 / SARB42), this protein is D-erythrose-4-phosphate dehydrogenase.